We begin with the raw amino-acid sequence, 78 residues long: MQANHSVSYLYESSTSKRSNGLFSQTQKQGSFQKALSQTQEEIEDEDLMVDLNTGSLTPVKLKYWTQMSAMTEKFGKL.

The tract at residues 1 to 28 (MQANHSVSYLYESSTSKRSNGLFSQTQK) is disordered.

This is an uncharacterized protein from Saccharomyces cerevisiae (strain ATCC 204508 / S288c) (Baker's yeast).